We begin with the raw amino-acid sequence, 441 residues long: tRNA modification GTPase MnmE (441 aa).

(6S)-5-formyl-5,6,7,8-tetrahydrofolate is bound by residues arginine 21, glutamate 79, and lysine 118. The TrmE-type G domain occupies 214–367 (GIHITILGAP…LVAELARVVE (154 aa)). GTP contacts are provided by residues 224 to 229 (NAGKSS), 243 to 249 (SAQAGTT), and 268 to 271 (DTAG). Mg(2+)-binding residues include serine 228 and threonine 249. Lysine 441 contacts (6S)-5-formyl-5,6,7,8-tetrahydrofolate.

The protein belongs to the TRAFAC class TrmE-Era-EngA-EngB-Septin-like GTPase superfamily. TrmE GTPase family. In terms of assembly, homodimer. Heterotetramer of two MnmE and two MnmG subunits. K(+) is required as a cofactor.

It localises to the cytoplasm. Functionally, exhibits a very high intrinsic GTPase hydrolysis rate. Involved in the addition of a carboxymethylaminomethyl (cmnm) group at the wobble position (U34) of certain tRNAs, forming tRNA-cmnm(5)s(2)U34. In Paramagnetospirillum magneticum (strain ATCC 700264 / AMB-1) (Magnetospirillum magneticum), this protein is tRNA modification GTPase MnmE.